Consider the following 606-residue polypeptide: Retrovirus-related Pol polyprotein from type-1 retrotransposable element R2 (606 aa).

The 208-residue stretch at 1 to 208 folds into the Reverse transcriptase domain; sequence GTLANIIMLE…NTFKYLGLTF (208 aa). The interval 331-606 is nucleic acid-binding endonuclease; sequence IFNIEGPARS…PPDPPRPVPP (276 aa).

The enzyme catalyses DNA(n) + a 2'-deoxyribonucleoside 5'-triphosphate = DNA(n+1) + diphosphate. This Popillia japonica (Japanese beetle) protein is Retrovirus-related Pol polyprotein from type-1 retrotransposable element R2.